A 1153-amino-acid chain; its full sequence is ATP-dependent helicase/deoxyribonuclease subunit B (1153 aa).

8-15 (GRAGSGKS) contributes to the ATP binding site. The [4Fe-4S] cluster site is built by C786, C1104, C1107, and C1113.

This sequence belongs to the helicase family. AddB/RexB type 1 subfamily. As to quaternary structure, heterodimer of AddA and AddB. The cofactor is Mg(2+). [4Fe-4S] cluster is required as a cofactor.

In terms of biological role, the heterodimer acts as both an ATP-dependent DNA helicase and an ATP-dependent, dual-direction single-stranded exonuclease. Recognizes the chi site generating a DNA molecule suitable for the initiation of homologous recombination. The AddB subunit has 5' -&gt; 3' nuclease activity but not helicase activity. This chain is ATP-dependent helicase/deoxyribonuclease subunit B, found in Clostridium acetobutylicum (strain ATCC 824 / DSM 792 / JCM 1419 / IAM 19013 / LMG 5710 / NBRC 13948 / NRRL B-527 / VKM B-1787 / 2291 / W).